Reading from the N-terminus, the 386-residue chain is Cytochrome b (386 aa).

4 helical membrane passes run 32-52 (TGSL…FTAM), 76-98 (YLIR…GHIG), 113-133 (VWVI…TGYC), and 179-199 (FFAL…MHLM). 2 residues coordinate heme b: His-82 and His-96. Heme b contacts are provided by His-183 and His-197. Residue His-202 coordinates a ubiquinone. 4 helical membrane passes run 225–245 (FVFK…TFVF), 289–309 (LGGV…PVTD), 321–341 (FSKT…QLGQ), and 348–368 (FIEM…VLVP).

It belongs to the cytochrome b family. As to quaternary structure, fungal cytochrome b-c1 complex contains 10 subunits; 3 respiratory subunits, 2 core proteins and 5 low-molecular weight proteins. Cytochrome b-c1 complex is a homodimer. Heme b serves as cofactor.

Its subcellular location is the mitochondrion inner membrane. Functionally, component of the ubiquinol-cytochrome c reductase complex (complex III or cytochrome b-c1 complex) that is part of the mitochondrial respiratory chain. The b-c1 complex mediates electron transfer from ubiquinol to cytochrome c. Contributes to the generation of a proton gradient across the mitochondrial membrane that is then used for ATP synthesis. The protein is Cytochrome b (COB) of Wickerhamomyces pijperi (Yeast).